A 247-amino-acid chain; its full sequence is Suppressor of silencing P0 (247 aa).

The F-box-like domain maps to 76 to 95 (LPRHLHYECLEWGLLCGTHP).

This sequence belongs to the polerovirus P0 protein family.

Its function is as follows. Suppressor of RNA-mediated gene silencing, also known as post-transcriptional gene silencing (PTGS), a mechanism of plant viral defense that limits the accumulation of viral RNAs. The P0 protein suppresses local PTGS using its F-box-like domain to mediate destabilization and degradation of the AGO1 protein, although not via an interaction with host SKP1A. Participates, together with the proteins P1 and P7, in the inhibition of the induction of aphid-induced host phytohormones. This could play a role in the attraction to the infected plants by aphids. This is Suppressor of silencing P0 from Potato leafroll virus (strain Potato/Scotland/strain 1/1984) (PLrV).